A 270-amino-acid polypeptide reads, in one-letter code: Thymidine kinase 2, mitochondrial (270 aa).

Residues 1–38 (MLLRSLRSWAARSPRSVGPGSSGSPGSLDSGAGPLWAP) constitute a mitochondrion transit peptide. Residues 1–54 (MLLRSLRSWAARSPRSVGPGSSGSPGSLDSGAGPLWAPRRAWPPDKDRENDKEK) form a disordered region. The segment covering 13–34 (SPRSVGPGSSGSPGSLDSGAGP) has biased composition (low complexity). A compositionally biased stretch (basic and acidic residues) spans 42-54 (WPPDKDRENDKEK). 62 to 70 (GNIASGKTT) lines the ATP pocket. Catalysis depends on Glu-138, which acts as the Proton acceptor.

Belongs to the DCK/DGK family. As to quaternary structure, homodimer. Found in most tissues; highly expressed in liver.

It localises to the mitochondrion. It catalyses the reaction thymidine + ATP = dTMP + ADP + H(+). It carries out the reaction 2'-deoxycytidine + ATP = dCMP + ADP + H(+). The enzyme catalyses 2'-deoxyuridine + ATP = dUMP + ADP + H(+). Its function is as follows. Phosphorylates thymidine, deoxycytidine, and deoxyuridine in the mitochondrial matrix. In non-replicating cells, where cytosolic dNTP synthesis is down-regulated, mtDNA synthesis depends solely on TK2 and DGUOK. This chain is Thymidine kinase 2, mitochondrial (Tk2), found in Mus musculus (Mouse).